Reading from the N-terminus, the 149-residue chain is Protein FAM72C (149 aa).

Belongs to the FAM72 family.

The chain is Protein FAM72C (FAM72C) from Homo sapiens (Human).